Here is a 391-residue protein sequence, read N- to C-terminus: Ferrochelatase (391 aa).

Fe cation-binding residues include H196 and E281.

It belongs to the ferrochelatase family.

It localises to the cytoplasm. The catalysed reaction is heme b + 2 H(+) = protoporphyrin IX + Fe(2+). Its pathway is porphyrin-containing compound metabolism; protoheme biosynthesis; protoheme from protoporphyrin-IX: step 1/1. In terms of biological role, catalyzes the ferrous insertion into protoporphyrin IX. The chain is Ferrochelatase from Prochlorococcus marinus (strain MIT 9301).